The chain runs to 240 residues: Mitochondrial transcription rescue factor 1 (240 aa).

The transit peptide at 1–84 directs the protein to the mitochondrion; it reads MAMASVKLLA…ECIFPFSVRL (84 aa). The tract at residues 95–127 is disordered; the sequence is KKSLQKVDEEDSDEESHHDEMSEQEEELEDDPT. A phosphoserine mark is found at Ser-106 and Ser-116. Acidic residues predominate over residues 116–126; that stretch reads SEQEEELEDDP. Positions 142–217 constitute an S4 RNA-binding domain; that stretch reads FRYDVVLKTG…LKKVFEEKTE (76 aa).

As to quaternary structure, monomer. Interacts with POLRMT. Interacts (via S4 domain) with MTRFR (via C-terminus). Associates with mitoribosomal S39 large subunit, peptidyl tRNA and nascent chain.

The protein localises to the mitochondrion matrix. Its function is as follows. Mitochondrial RNA-binding protein involved in mitochondrial transcription regulation. Functions as a protective factor to maintain proper mitochondrial RNA level during stress. Acts at the transcription level and its protective function depends on its RNA binding ability. Part of a mitoribosome-associated quality control pathway that prevents aberrant translation by responding to interruptions during elongation. As heterodimer with MTRF, ejects the unfinished nascent chain and peptidyl transfer RNA (tRNA), respectively, from stalled ribosomes. Recruitment of mitoribosome biogenesis factors to these quality control intermediates suggests additional roles for MTRES1 and MTRF during mitoribosome rescue. This is Mitochondrial transcription rescue factor 1 from Homo sapiens (Human).